A 941-amino-acid polypeptide reads, in one-letter code: Pre-mRNA-processing factor 6 (941 aa).

Residues 1–79 (MNKKKKPFLG…DEDLNDTNYD (79 aa)) are disordered. The span at 39–65 (DANDPVDDRHAPPGKRTVGDQMKKNQA) shows a compositional bias: basic and acidic residues. Residues 66–78 (ADDDDEDLNDTNY) show a composition bias toward acidic residues. S143 carries the phosphoserine modification. T180, T266, and T275 each carry phosphothreonine. Phosphoserine is present on S279. HAT repeat units follow at residues 384–416 (TDIR…LEEP), 418–444 (DARI…ARLE), 445–476 (TYEN…LEEA), 554–586 (NALE…FGKN), 588–620 (GTRE…SKWL), 622–654 (GDVP…LESE), 689–721 (DNIR…IEEQ), 723–755 (EMME…LEEK), and 855–887 (RKIT…FELQ).

In terms of assembly, identified in the spliceosome B complex. Identified in the spliceosome C complex. Associates with the U5 snRNP particle. Component of the U4/U6-U5 tri-snRNP complex composed of the U4, U6 and U5 snRNAs and at least PRPF3, PRPF4, PRPF6, PRPF8, PRPF31, SNRNP200, TXNL4A, SNRNP40, DDX23, CD2BP2, PPIH, SNU13, EFTUD2, SART1 and USP39, LSm proteins LSm2-8 and Sm proteins. Interacts with ARAF1. Interacts with AR and NR3C1, but not ESR1, independently of the presence of hormones. Interacts with USH1G. Phosphorylated by PRP4K during spliceosome assembly.

Its subcellular location is the nucleus. The protein localises to the nucleoplasm. It localises to the nucleus speckle. Involved in pre-mRNA splicing as component of the U4/U6-U5 tri-snRNP complex, one of the building blocks of the spliceosome. Enhances dihydrotestosterone-induced transactivation activity of AR, as well as dexamethasone-induced transactivation activity of NR3C1, but does not affect estrogen-induced transactivation. This chain is Pre-mRNA-processing factor 6 (PRPF6), found in Pongo abelii (Sumatran orangutan).